Consider the following 376-residue polypeptide: MGDFVFCYGSRNKKHLSKYIKQTKHNYRLYLSDDDYIKVKIETRINQKYIIVDFNDSINFIKFIVKEKIYCQMSYKHSCNLFFYQNNYLKYIIHNKHLDAIKIFYKKFIPMVNSVLKFDLLFNYQYSQIDPEILKYIFKHGDLKDTVPLIIGCVYQYPNITIEFMSDIIFIYKHKLVKILSGNKFLDVDFDKIMISIFIFLVPSLEKDDIEFFNFIVDEFRYLLNDIDETKLNDEQLSLLKKFRSEYEILDINDFIYCYTVCDFSTQNEKTYYCPNIFRQMVLSLDNINYLKNNVVPDILEYDIVEYMGVICDFIGTTNPKLINKMLTKARSTEMAQLLIDYGADYEKLYESNKFRECHSSVKKLVRKIIRETSDS.

Belongs to the mimivirus L17x/L18x family.

This is an uncharacterized protein from Acanthamoeba polyphaga (Amoeba).